A 324-amino-acid chain; its full sequence is Acetyl-coenzyme A carboxylase carboxyl transferase subunit alpha (324 aa).

The region spanning 44-298 (QLERRAEELR…KQTLIDTIDE (255 aa)) is the CoA carboxyltransferase C-terminal domain.

The protein belongs to the AccA family. In terms of assembly, acetyl-CoA carboxylase is a heterohexamer composed of biotin carboxyl carrier protein (AccB), biotin carboxylase (AccC) and two subunits each of ACCase subunit alpha (AccA) and ACCase subunit beta (AccD).

The protein resides in the cytoplasm. It catalyses the reaction N(6)-carboxybiotinyl-L-lysyl-[protein] + acetyl-CoA = N(6)-biotinyl-L-lysyl-[protein] + malonyl-CoA. It functions in the pathway lipid metabolism; malonyl-CoA biosynthesis; malonyl-CoA from acetyl-CoA: step 1/1. In terms of biological role, component of the acetyl coenzyme A carboxylase (ACC) complex. First, biotin carboxylase catalyzes the carboxylation of biotin on its carrier protein (BCCP) and then the CO(2) group is transferred by the carboxyltransferase to acetyl-CoA to form malonyl-CoA. This chain is Acetyl-coenzyme A carboxylase carboxyl transferase subunit alpha, found in Rippkaea orientalis (strain PCC 8801 / RF-1) (Cyanothece sp. (strain PCC 8801)).